A 465-amino-acid chain; its full sequence is Respiratory transcription factor ZNF1 (465 aa).

The zn(2)-C6 fungal-type DNA-binding region spans 8-34; the sequence is CDCCCIRRVKCDRKKPCKCCLQHNLQC.

The protein belongs to the MAL13 family.

It is found in the nucleus. Transcription factor that regulates respiratory growth and plays a critical role in stress adaptation during non-fermentative growth. Binds to promoters of genes involved in non-fermentative metabolism, including processes such as gluconeogenesis (PCK1, FBP1 and MDH2), glyoxylate shunt (MLS1 and ICL1) and the tricarboxylic acid cycle (ACO1). Plays a role in maintaining mitochondrial morphology and function. Also plays a role in tolerance to pH and osmotic stress, especially during the oxidative metabolism. This chain is Respiratory transcription factor ZNF1, found in Saccharomyces cerevisiae (strain ATCC 204508 / S288c) (Baker's yeast).